A 396-amino-acid polypeptide reads, in one-letter code: NADH-quinone oxidoreductase subunit D (396 aa).

The protein belongs to the complex I 49 kDa subunit family. As to quaternary structure, NDH-1 is composed of 14 different subunits. Subunits NuoB, C, D, E, F, and G constitute the peripheral sector of the complex.

The protein localises to the cell inner membrane. The enzyme catalyses a quinone + NADH + 5 H(+)(in) = a quinol + NAD(+) + 4 H(+)(out). NDH-1 shuttles electrons from NADH, via FMN and iron-sulfur (Fe-S) centers, to quinones in the respiratory chain. The immediate electron acceptor for the enzyme in this species is believed to be ubiquinone. Couples the redox reaction to proton translocation (for every two electrons transferred, four hydrogen ions are translocated across the cytoplasmic membrane), and thus conserves the redox energy in a proton gradient. The polypeptide is NADH-quinone oxidoreductase subunit D (Rhizobium johnstonii (strain DSM 114642 / LMG 32736 / 3841) (Rhizobium leguminosarum bv. viciae)).